Here is a 330-residue protein sequence, read N- to C-terminus: T-cell leukemia homeobox protein 1 (330 aa).

The segment at Asp186–Ser207 is disordered. Residues Lys201–Thr260 constitute a DNA-binding region (homeobox). The residue at position 236 (Lys236) is an N6-acetyllysine.

In terms of assembly, interacts with MEIS1, MEIS2, PBX1, PBX2 and PBX3.

The protein localises to the nucleus. Functionally, controls the genesis of the spleen. Binds to the DNA sequence 5'-GGCGGTAAGTGG-3'. The protein is T-cell leukemia homeobox protein 1 (TLX1) of Homo sapiens (Human).